The primary structure comprises 491 residues: Polybrominated aromatic compounds synthase (491 aa).

Heme is bound at residue Cys437.

It belongs to the cytochrome P450 family. Requires heme as cofactor.

Cytochrome P450 protein involved in the biosynthesis of polybrominated aromatic organic compounds. In the presence of ferredoxin, ferredoxin reductase and NADH, catalyzes the coupling of bromophenols and bromopyrroles, forming various polybrominated biphenyls and hydroxylated polybrominated diphenyl ethers (OH-BDE). Can also mediate the heterocoupling of 3,5-dibromocatechol. Can also use chlorinated phenolic substrates. 2,3,4-tribromopyrrole could be the physiological substrate. This chain is Polybrominated aromatic compounds synthase, found in Pseudoalteromonas luteoviolacea (strain 2ta16).